A 450-amino-acid polypeptide reads, in one-letter code: tRNA-2-methylthio-N(6)-dimethylallyladenosine synthase (450 aa).

Residues 14 to 132 (GEFFIETWGC…FPNYLNEVKK (119 aa)) enclose the MTTase N-terminal domain. [4Fe-4S] cluster-binding residues include cysteine 23, cysteine 59, cysteine 93, cysteine 169, cysteine 173, and cysteine 176. One can recognise a Radical SAM core domain in the interval 155–385 (RKNSMKAFVT…VEVLNEISAK (231 aa)). The TRAM domain maps to 388 to 450 (KAYEGKIEEV…NSFSLTGEEI (63 aa)).

This sequence belongs to the methylthiotransferase family. MiaB subfamily. In terms of assembly, monomer. The cofactor is [4Fe-4S] cluster.

It is found in the cytoplasm. It catalyses the reaction N(6)-dimethylallyladenosine(37) in tRNA + (sulfur carrier)-SH + AH2 + 2 S-adenosyl-L-methionine = 2-methylsulfanyl-N(6)-dimethylallyladenosine(37) in tRNA + (sulfur carrier)-H + 5'-deoxyadenosine + L-methionine + A + S-adenosyl-L-homocysteine + 2 H(+). Functionally, catalyzes the methylthiolation of N6-(dimethylallyl)adenosine (i(6)A), leading to the formation of 2-methylthio-N6-(dimethylallyl)adenosine (ms(2)i(6)A) at position 37 in tRNAs that read codons beginning with uridine. This chain is tRNA-2-methylthio-N(6)-dimethylallyladenosine synthase, found in Clostridium botulinum (strain ATCC 19397 / Type A).